The sequence spans 263 residues: 3-deoxy-manno-octulosonate cytidylyltransferase 1 (263 aa).

This sequence belongs to the KdsB family.

The protein resides in the cytoplasm. The catalysed reaction is 3-deoxy-alpha-D-manno-oct-2-ulosonate + CTP = CMP-3-deoxy-beta-D-manno-octulosonate + diphosphate. Its pathway is nucleotide-sugar biosynthesis; CMP-3-deoxy-D-manno-octulosonate biosynthesis; CMP-3-deoxy-D-manno-octulosonate from 3-deoxy-D-manno-octulosonate and CTP: step 1/1. It functions in the pathway bacterial outer membrane biogenesis; lipopolysaccharide biosynthesis. Its function is as follows. Activates KDO (a required 8-carbon sugar) for incorporation into bacterial lipopolysaccharide in Gram-negative bacteria. This is 3-deoxy-manno-octulosonate cytidylyltransferase 1 from Burkholderia ambifaria (strain ATCC BAA-244 / DSM 16087 / CCUG 44356 / LMG 19182 / AMMD) (Burkholderia cepacia (strain AMMD)).